Consider the following 483-residue polypeptide: Glutamyl-tRNA(Gln) amidotransferase subunit A (483 aa).

Catalysis depends on charge relay system residues K77 and S152. Catalysis depends on S176, which acts as the Acyl-ester intermediate.

Belongs to the amidase family. GatA subfamily. In terms of assembly, heterotrimer of A, B and C subunits.

The catalysed reaction is L-glutamyl-tRNA(Gln) + L-glutamine + ATP + H2O = L-glutaminyl-tRNA(Gln) + L-glutamate + ADP + phosphate + H(+). In terms of biological role, allows the formation of correctly charged Gln-tRNA(Gln) through the transamidation of misacylated Glu-tRNA(Gln) in organisms which lack glutaminyl-tRNA synthetase. The reaction takes place in the presence of glutamine and ATP through an activated gamma-phospho-Glu-tRNA(Gln). This chain is Glutamyl-tRNA(Gln) amidotransferase subunit A, found in Listeria monocytogenes serovar 1/2a (strain ATCC BAA-679 / EGD-e).